A 994-amino-acid chain; its full sequence is Alpha-mannosidase F (994 aa).

The N-terminal stretch at 1–20 is a signal peptide; it reads MKNFYYFILILLFFNEVCYS. Zn(2+) is bound by residues histidine 35, aspartate 37, and aspartate 151. Catalysis depends on aspartate 151, which acts as the Nucleophile. N-linked (GlcNAc...) asparagine glycans are attached at residues asparagine 247 and asparagine 381. Histidine 392 provides a ligand contact to Zn(2+). N-linked (GlcNAc...) asparagine glycans are attached at residues asparagine 554, asparagine 712, and asparagine 932.

Belongs to the glycosyl hydrolase 38 family. The cofactor is Zn(2+).

It is found in the secreted. It catalyses the reaction Hydrolysis of terminal, non-reducing alpha-D-mannose residues in alpha-D-mannosides.. The chain is Alpha-mannosidase F (manF) from Dictyostelium discoideum (Social amoeba).